We begin with the raw amino-acid sequence, 240 residues long: LexA repressor (240 aa).

The H-T-H motif DNA-binding region spans 26-46 (FDEMKDALDLASKSGIHRLIT). The interval 78–113 (QPRRGFSPSVIEGSLGKPQPVQPPAPAKPANDENNS) is disordered. Residues Ser-160 and Lys-198 each act as for autocatalytic cleavage activity in the active site.

The protein belongs to the peptidase S24 family. As to quaternary structure, homodimer.

It catalyses the reaction Hydrolysis of Ala-|-Gly bond in repressor LexA.. Represses a number of genes involved in the response to DNA damage (SOS response), including recA and lexA. In the presence of single-stranded DNA, RecA interacts with LexA causing an autocatalytic cleavage which disrupts the DNA-binding part of LexA, leading to derepression of the SOS regulon and eventually DNA repair. In Rhizobium rhizogenes (strain K84 / ATCC BAA-868) (Agrobacterium radiobacter), this protein is LexA repressor.